The primary structure comprises 332 residues: 6-phosphogluconolactonase (332 aa).

The protein belongs to the cycloisomerase 2 family.

It catalyses the reaction 6-phospho-D-glucono-1,5-lactone + H2O = 6-phospho-D-gluconate + H(+). It functions in the pathway carbohydrate degradation; pentose phosphate pathway; D-ribulose 5-phosphate from D-glucose 6-phosphate (oxidative stage): step 2/3. Its function is as follows. Catalyzes the hydrolysis of 6-phosphogluconolactone to 6-phosphogluconate. This chain is 6-phosphogluconolactonase, found in Pectobacterium atrosepticum (strain SCRI 1043 / ATCC BAA-672) (Erwinia carotovora subsp. atroseptica).